The chain runs to 146 residues: Anti-sigma F factor (146 aa).

Belongs to the anti-sigma-factor family.

The catalysed reaction is L-seryl-[protein] + ATP = O-phospho-L-seryl-[protein] + ADP + H(+). It catalyses the reaction L-threonyl-[protein] + ATP = O-phospho-L-threonyl-[protein] + ADP + H(+). In terms of biological role, binds to sigma F and blocks its ability to form an RNA polymerase holoenzyme (E-sigma F). Phosphorylates SpoIIAA on a serine residue. This phosphorylation may enable SpoIIAA to act as an anti-anti-sigma factor that counteracts SpoIIAB and thus releases sigma F from inhibition. The sequence is that of Anti-sigma F factor from Geobacillus sp. (strain WCH70).